Here is a 981-residue protein sequence, read N- to C-terminus: Beta-glucuronidase (981 aa).

The Nucleophile role is filled by glutamate 500. 5 residues coordinate Mg(2+): asparagine 561, tryptophan 562, isoleucine 563, serine 581, and glutamate 583.

It belongs to the glycosyl hydrolase 2 family.

The protein resides in the periplasm. The enzyme catalyses a beta-D-glucuronoside + H2O = D-glucuronate + an alcohol. Its function is as follows. Beta-glucuronidase involved in ulvan degradation. Ulvan is the main polysaccharide component of the Ulvales (green seaweed) cell wall. It is composed of disaccharide building blocks comprising 3-sulfated rhamnose (Rha3S) linked to D-glucuronic acid (GlcA), L-iduronic acid (IduA), or D-xylose (Xyl). Beta-glucuronidase removes GlcA side chains present on some O2 residues of Rha3S. Can remove the GlcA side chains from polymeric ulvan or from smaller oligomers. In Formosa agariphila (strain DSM 15362 / KCTC 12365 / LMG 23005 / KMM 3901 / M-2Alg 35-1), this protein is Beta-glucuronidase.